The chain runs to 88 residues: UPF0250 protein Sama_2593 (88 aa).

The protein belongs to the UPF0250 family.

The protein is UPF0250 protein Sama_2593 of Shewanella amazonensis (strain ATCC BAA-1098 / SB2B).